The sequence spans 32 residues: uncharacterized protein (32 aa).

Residues 3–23 (IGIIFPVVIFITAVVFLAWFF) traverse the membrane as a helical segment.

It localises to the cell inner membrane. This is an uncharacterized protein from Escherichia coli (strain K12).